The sequence spans 824 residues: Protein-glutamine gamma-glutamyltransferase K (824 aa).

Over residues 1–10 the composition is skewed to basic and acidic residues; the sequence is MEGPRSDVGR. Disordered stretches follow at residues 1–44 and 61–110; these read MEGP…GGRS and DDWG…AAGD. Thr-20 carries the phosphothreonine modification. 5 positions are modified to phosphoserine: Ser-22, Ser-70, Ser-92, Ser-100, and Ser-103. The segment covering 65-76 has biased composition (low complexity); that stretch reads PEPSGSRSRGTS. Over residues 85–100 the composition is skewed to basic and acidic residues; it reads GDSRGRDSRGGRRPES. Active-site residues include Cys-385, His-444, and Asp-467. Residues Asn-507, Asp-509, Glu-556, and Glu-561 each coordinate Ca(2+). The tract at residues 801 to 824 is disordered; sequence RGFSEAVGDSRSGENIPMAFRGGA. Phosphoserine is present on Ser-812.

The protein belongs to the transglutaminase superfamily. Transglutaminase family. As to quaternary structure, interacts with PLAAT4. The cofactor is Ca(2+). In terms of processing, palmitoylated. Post-translationally, the membrane anchorage region possesses a cluster of five cysteines within which fatty acid(s) may become thioester-linked. It is subject to phorbol ester-stimulated phosphorylation and is hypersensitive to proteolysis, which releases the enzyme in a soluble form. Tyrosine-phosphorylated.

It localises to the membrane. The catalysed reaction is L-glutaminyl-[protein] + L-lysyl-[protein] = [protein]-L-lysyl-N(6)-5-L-glutamyl-[protein] + NH4(+). Its function is as follows. Catalyzes the cross-linking of proteins and the conjugation of polyamines to proteins. Responsible for cross-linking epidermal proteins during formation of the stratum corneum. Involved in cell proliferation. This is Protein-glutamine gamma-glutamyltransferase K (Tgm1) from Rattus norvegicus (Rat).